A 297-amino-acid polypeptide reads, in one-letter code: Cell division protein FtsX (297 aa).

At 1–21 (MRFGFLLNEVLTGFRRNVTMT) the chain is on the cytoplasmic side. A helical transmembrane segment spans residues 22-42 (IAMILTTAISVGLFGGGMLVV). Residues 43–171 (RLADSSRAIY…LFAVLDGLSN (129 aa)) lie on the Extracellular side of the membrane. The chain crosses the membrane as a helical span at residues 172 to 192 (AAFAVALVQAIGAILLIANMV). Over 193–219 (QVAAYTRRTEIGIMRLVGASRWYTQLP) the chain is Cytoplasmic. Residues 220–240 (FLVEAMLAATMGVGIAVAGLM) traverse the membrane as a helical segment. The Extracellular segment spans residues 241-267 (VVRALFLENALNQFYQANLIAKVDYAD). A helical transmembrane segment spans residues 268–288 (ILFITPWLLLLGVAMSGLTAY). Over 289–297 (LTLRLYVRR) the chain is Cytoplasmic.

The protein belongs to the ABC-4 integral membrane protein family. FtsX subfamily. Forms a membrane-associated complex with FtsE.

Its subcellular location is the cell membrane. Functionally, part of the ABC transporter FtsEX involved in cellular division. In Mycobacterium tuberculosis (strain ATCC 25177 / H37Ra), this protein is Cell division protein FtsX.